The sequence spans 84 residues: U2-theraphotoxin-Cg1b 2 (84 aa).

Residues 1 to 21 (MKVSVLITLAVLGVMFLLTSA) form the signal peptide. Positions 22–48 (EERGSDQMDSPAWLKSMEIIFQSEERE) are excised as a propeptide. Intrachain disulfides connect Cys-49-Cys-63, Cys-56-Cys-68, and Cys-62-Cys-76.

The protein belongs to the neurotoxin 10 (Hwtx-1) family. 06 (F4b) subfamily. As to expression, expressed by the venom gland.

Its subcellular location is the secreted. Its function is as follows. Probable ion channel inhibitor. The sequence is that of U2-theraphotoxin-Cg1b 2 from Chilobrachys guangxiensis (Chinese earth tiger tarantula).